Consider the following 244-residue polypeptide: Small ribosomal subunit protein uS3 (244 aa).

In terms of domain architecture, KH type-2 spans 38–106 (IRKYLNARLA…DIQINIFEVK (69 aa)). A disordered region spans residues 217–244 (TQSKESGRGNNGGNNGGGKNFKRKKNNR). Positions 225 to 235 (GNNGGNNGGGK) are enriched in gly residues.

Belongs to the universal ribosomal protein uS3 family. As to quaternary structure, part of the 30S ribosomal subunit. Forms a tight complex with proteins S10 and S14.

In terms of biological role, binds the lower part of the 30S subunit head. Binds mRNA in the 70S ribosome, positioning it for translation. This Bacteroides fragilis (strain ATCC 25285 / DSM 2151 / CCUG 4856 / JCM 11019 / LMG 10263 / NCTC 9343 / Onslow / VPI 2553 / EN-2) protein is Small ribosomal subunit protein uS3.